The chain runs to 308 residues: tRNA dimethylallyltransferase (308 aa).

An ATP-binding site is contributed by 14–21 (GPTASGKT). Substrate is bound at residue 16–21 (TASGKT). Interaction with substrate tRNA regions lie at residues 39–42 (DSAL), 163–167 (QRLAR), and 244–249 (RCVGYR).

It belongs to the IPP transferase family. Monomer. Mg(2+) serves as cofactor.

It catalyses the reaction adenosine(37) in tRNA + dimethylallyl diphosphate = N(6)-dimethylallyladenosine(37) in tRNA + diphosphate. Functionally, catalyzes the transfer of a dimethylallyl group onto the adenine at position 37 in tRNAs that read codons beginning with uridine, leading to the formation of N6-(dimethylallyl)adenosine (i(6)A). This Shewanella halifaxensis (strain HAW-EB4) protein is tRNA dimethylallyltransferase.